Here is a 124-residue protein sequence, read N- to C-terminus: Alpha-amylase inhibitor 0.19 (124 aa).

Intrachain disulfides connect Cys-6/Cys-52, Cys-20/Cys-41, Cys-28/Cys-83, Cys-42/Cys-99, and Cys-54/Cys-115.

The protein belongs to the protease inhibitor I6 (cereal trypsin/alpha-amylase inhibitor) family. In terms of assembly, homodimer. In terms of processing, the disulfide bonds are essential for the inhibitor activity. Endosperm.

The protein localises to the secreted. Its function is as follows. Alpha-amylase inhibitor. The polypeptide is Alpha-amylase inhibitor 0.19 (Triticum aestivum (Wheat)).